Here is a 686-residue protein sequence, read N- to C-terminus: Potassium-transporting ATPase ATP-binding subunit (686 aa).

The next 2 helical transmembrane spans lie at 38-58 and 64-84; these read VMFVVWAGSLLTTVLVVKDLV and AAPLGFTVQVTLWLWFTVLFA. The tract at residues 101 to 123 is disordered; sequence ALRKMRKETTARRWKDGREERVP. The segment covering 107 to 123 has biased composition (basic and acidic residues); that stretch reads KETTARRWKDGREERVP. 2 helical membrane passes run 224-244 and 257-277; these read ILLVGLTLIFLLACVTLVPLA and VALLVCLIPTTIGGLLSAIGI. The active-site 4-aspartylphosphate intermediate is D308. ATP contacts are provided by residues D345, E349, 378–385, and K399; that span reads FTAQTRMS. Residues D522 and D526 each coordinate Mg(2+). The next 3 helical transmembrane spans lie at 592-612, 620-640, and 666-686; these read FAILPALFMGVFPQIAPLNVM, AVLSAVIFNALIIILLIPLAL, and VIVPFVGIKVIDVLLGAVGLA.

This sequence belongs to the cation transport ATPase (P-type) (TC 3.A.3) family. Type IA subfamily. In terms of assembly, the system is composed of three essential subunits: KdpA, KdpB and KdpC.

Its subcellular location is the cell membrane. It catalyses the reaction K(+)(out) + ATP + H2O = K(+)(in) + ADP + phosphate + H(+). Part of the high-affinity ATP-driven potassium transport (or Kdp) system, which catalyzes the hydrolysis of ATP coupled with the electrogenic transport of potassium into the cytoplasm. This subunit is responsible for energy coupling to the transport system and for the release of the potassium ions to the cytoplasm. The protein is Potassium-transporting ATPase ATP-binding subunit of Myxococcus xanthus.